The primary structure comprises 229 residues: Large ribosomal subunit protein uL1 (229 aa).

It belongs to the universal ribosomal protein uL1 family. As to quaternary structure, part of the 50S ribosomal subunit.

In terms of biological role, binds directly to 23S rRNA. The L1 stalk is quite mobile in the ribosome, and is involved in E site tRNA release. Protein L1 is also a translational repressor protein, it controls the translation of the L11 operon by binding to its mRNA. This is Large ribosomal subunit protein uL1 from Pediococcus pentosaceus (strain ATCC 25745 / CCUG 21536 / LMG 10740 / 183-1w).